Reading from the N-terminus, the 84-residue chain is uncharacterized protein (84 aa).

This is an uncharacterized protein from Orgyia pseudotsugata multicapsid polyhedrosis virus (OpMNPV).